The chain runs to 374 residues: Carnitine monooxygenase oxygenase subunit (374 aa).

One can recognise a Rieske domain in the interval 47–155 (WICVAHSSEL…LEEYAGFVFI (109 aa)). Residues Cys89, His91, Cys109, and His112 each coordinate [2Fe-2S] cluster. Positions 211, 216, and 325 each coordinate Fe cation.

It belongs to the bacterial ring-hydroxylating dioxygenase alpha subunit family. CntA subfamily. In terms of assembly, composed of an oxygenase subunit and a reductase subunit. Requires [2Fe-2S] cluster as cofactor. The cofactor is Fe cation.

The enzyme catalyses (R)-carnitine + NADH + O2 + H(+) = (3R)-3-hydroxy-4-oxobutanoate + trimethylamine + NAD(+) + H2O. It catalyses the reaction (R)-carnitine + NADPH + O2 + H(+) = (3R)-3-hydroxy-4-oxobutanoate + trimethylamine + NADP(+) + H2O. It participates in amine and polyamine metabolism; carnitine metabolism. Functionally, converts carnitine to trimethylamine and malic semialdehyde. In Escherichia coli O157:H7, this protein is Carnitine monooxygenase oxygenase subunit (yeaW).